We begin with the raw amino-acid sequence, 266 residues long: Undecaprenyl-diphosphatase (266 aa).

The next 8 membrane-spanning stretches (helical) occupy residues 1–21, 43–63, 81–101, 109–129, 159–179, 183–203, 219–239, and 246–266; these read MVVI…SSTG, FLII…WKDI, LKII…DDII, VLIV…IEVV, LAMI…LLLG, PLAA…ATAL, YLAL…KWFM, and SFAS…VLLY.

It belongs to the UppP family.

Its subcellular location is the cell inner membrane. It carries out the reaction di-trans,octa-cis-undecaprenyl diphosphate + H2O = di-trans,octa-cis-undecaprenyl phosphate + phosphate + H(+). Catalyzes the dephosphorylation of undecaprenyl diphosphate (UPP). Confers resistance to bacitracin. The protein is Undecaprenyl-diphosphatase of Fusobacterium nucleatum subsp. nucleatum (strain ATCC 25586 / DSM 15643 / BCRC 10681 / CIP 101130 / JCM 8532 / KCTC 2640 / LMG 13131 / VPI 4355).